The sequence spans 99 residues: UPF0213 protein YazA (99 aa).

A GIY-YIG domain is found at 4–79 (NNHFFYVVKC…KKLTRKKKEL (76 aa)).

The protein belongs to the UPF0213 family.

The chain is UPF0213 protein YazA (yazA) from Bacillus subtilis (strain 168).